Here is a 187-residue protein sequence, read N- to C-terminus: MRTFIAIDVNEEVKKQASEIIEKLMKRGFGATWVSEENMHLTLFFLGEVDEQKISEIAEHLCRRVRGFPSFSFTVKGFGYFKRKMSPRVFWLGVENTDRLMKLYEELRNELSHHGFSFEEKFVPHITIGRVKYYPDKWEKLIEDIDFPPIEVAVDRFKIYSSTLTPTGPIYKVLYECQFEGGLIRYA.

The active-site Proton donor is the His-40. 2 consecutive short sequence motifs (HXTX) follow at residues 40-43 (HLTL) and 125-128 (HITI). The active-site Proton acceptor is His-125.

This sequence belongs to the 2H phosphoesterase superfamily. ThpR family.

The catalysed reaction is a 3'-end 2',3'-cyclophospho-ribonucleotide-RNA + H2O = a 3'-end 2'-phospho-ribonucleotide-RNA + H(+). Functionally, hydrolyzes RNA 2',3'-cyclic phosphodiester to an RNA 2'-phosphomonoester. This is RNA 2',3'-cyclic phosphodiesterase from Thermotoga maritima (strain ATCC 43589 / DSM 3109 / JCM 10099 / NBRC 100826 / MSB8).